The sequence spans 722 residues: Probable acyl-activating enzyme 16, chloroplastic (722 aa).

The transit peptide at 1–47 directs the protein to the chloroplast; sequence MASTSLGASILVSHCSSAPEFQVSGMRLVFGYKAFGCRTSRRGFRVR.

The protein belongs to the ATP-dependent AMP-binding enzyme family.

The protein localises to the plastid. It is found in the chloroplast. Its function is as follows. May be involved in the activation of fatty acids to acyl-carrier-protein. The chain is Probable acyl-activating enzyme 16, chloroplastic (AAE16) from Arabidopsis thaliana (Mouse-ear cress).